A 204-amino-acid polypeptide reads, in one-letter code: 3-isopropylmalate dehydratase small subunit (204 aa).

Belongs to the LeuD family. LeuD type 1 subfamily. Heterodimer of LeuC and LeuD.

It carries out the reaction (2R,3S)-3-isopropylmalate = (2S)-2-isopropylmalate. Its pathway is amino-acid biosynthesis; L-leucine biosynthesis; L-leucine from 3-methyl-2-oxobutanoate: step 2/4. Catalyzes the isomerization between 2-isopropylmalate and 3-isopropylmalate, via the formation of 2-isopropylmaleate. This is 3-isopropylmalate dehydratase small subunit from Clavibacter michiganensis subsp. michiganensis (strain NCPPB 382).